Here is a 333-residue protein sequence, read N- to C-terminus: Biotin synthase (333 aa).

The 230-residue stretch at 46–275 (YYGKKVKLNM…TKEIRISGGR (230 aa)) folds into the Radical SAM core domain. The [4Fe-4S] cluster site is built by cysteine 64, cysteine 68, and cysteine 71. [2Fe-2S] cluster is bound by residues cysteine 108, cysteine 140, cysteine 200, and arginine 270.

Belongs to the radical SAM superfamily. Biotin synthase family. In terms of assembly, homodimer. Requires [4Fe-4S] cluster as cofactor. [2Fe-2S] cluster is required as a cofactor.

The catalysed reaction is (4R,5S)-dethiobiotin + (sulfur carrier)-SH + 2 reduced [2Fe-2S]-[ferredoxin] + 2 S-adenosyl-L-methionine = (sulfur carrier)-H + biotin + 2 5'-deoxyadenosine + 2 L-methionine + 2 oxidized [2Fe-2S]-[ferredoxin]. It participates in cofactor biosynthesis; biotin biosynthesis; biotin from 7,8-diaminononanoate: step 2/2. Its function is as follows. Catalyzes the conversion of dethiobiotin (DTB) to biotin by the insertion of a sulfur atom into dethiobiotin via a radical-based mechanism. This is Biotin synthase from Halalkalibacterium halodurans (strain ATCC BAA-125 / DSM 18197 / FERM 7344 / JCM 9153 / C-125) (Bacillus halodurans).